Consider the following 521-residue polypeptide: UDP-N-acetylmuramoyl-L-alanyl-D-glutamate--2,6-diaminopimelate ligase (521 aa).

Ser33 contacts UDP-N-acetyl-alpha-D-muramoyl-L-alanyl-D-glutamate. 116–122 (GTNGKTT) is a binding site for ATP. UDP-N-acetyl-alpha-D-muramoyl-L-alanyl-D-glutamate-binding positions include 158–159 (TT), Ser185, Gln191, and Arg193. Residue Lys225 is modified to N6-carboxylysine. Meso-2,6-diaminopimelate contacts are provided by residues Arg409, 433–436 (DNPR), Gly483, and Glu487. Residues 433–436 (DNPR) carry the Meso-diaminopimelate recognition motif motif.

Belongs to the MurCDEF family. MurE subfamily. The cofactor is Mg(2+). In terms of processing, carboxylation is probably crucial for Mg(2+) binding and, consequently, for the gamma-phosphate positioning of ATP.

The protein resides in the cytoplasm. It carries out the reaction UDP-N-acetyl-alpha-D-muramoyl-L-alanyl-D-glutamate + meso-2,6-diaminopimelate + ATP = UDP-N-acetyl-alpha-D-muramoyl-L-alanyl-gamma-D-glutamyl-meso-2,6-diaminopimelate + ADP + phosphate + H(+). Its pathway is cell wall biogenesis; peptidoglycan biosynthesis. Catalyzes the addition of meso-diaminopimelic acid to the nucleotide precursor UDP-N-acetylmuramoyl-L-alanyl-D-glutamate (UMAG) in the biosynthesis of bacterial cell-wall peptidoglycan. The chain is UDP-N-acetylmuramoyl-L-alanyl-D-glutamate--2,6-diaminopimelate ligase from Nitrosomonas europaea (strain ATCC 19718 / CIP 103999 / KCTC 2705 / NBRC 14298).